Here is a 176-residue protein sequence, read N- to C-terminus: ATP synthase subunit delta (176 aa).

It belongs to the ATPase delta chain family. F-type ATPases have 2 components, F(1) - the catalytic core - and F(0) - the membrane proton channel. F(1) has five subunits: alpha(3), beta(3), gamma(1), delta(1), epsilon(1). F(0) has three main subunits: a(1), b(2) and c(10-14). The alpha and beta chains form an alternating ring which encloses part of the gamma chain. F(1) is attached to F(0) by a central stalk formed by the gamma and epsilon chains, while a peripheral stalk is formed by the delta and b chains.

The protein localises to the cell inner membrane. F(1)F(0) ATP synthase produces ATP from ADP in the presence of a proton or sodium gradient. F-type ATPases consist of two structural domains, F(1) containing the extramembraneous catalytic core and F(0) containing the membrane proton channel, linked together by a central stalk and a peripheral stalk. During catalysis, ATP synthesis in the catalytic domain of F(1) is coupled via a rotary mechanism of the central stalk subunits to proton translocation. In terms of biological role, this protein is part of the stalk that links CF(0) to CF(1). It either transmits conformational changes from CF(0) to CF(1) or is implicated in proton conduction. The chain is ATP synthase subunit delta from Actinobacillus succinogenes (strain ATCC 55618 / DSM 22257 / CCUG 43843 / 130Z).